We begin with the raw amino-acid sequence, 546 residues long: Chaperonin GroEL (546 aa).

ATP contacts are provided by residues 30–33 (TLGP), K51, 87–91 (DGTTT), G415, and D497. Positions 527 to 546 (PKKDSPAPAMPGGGMGGMDF) are disordered. Gly residues predominate over residues 537 to 546 (PGGGMGGMDF).

Belongs to the chaperonin (HSP60) family. Forms a cylinder of 14 subunits composed of two heptameric rings stacked back-to-back. Interacts with the co-chaperonin GroES.

It localises to the cytoplasm. The catalysed reaction is ATP + H2O + a folded polypeptide = ADP + phosphate + an unfolded polypeptide.. In terms of biological role, together with its co-chaperonin GroES, plays an essential role in assisting protein folding. The GroEL-GroES system forms a nano-cage that allows encapsulation of the non-native substrate proteins and provides a physical environment optimized to promote and accelerate protein folding. In Methylobacterium radiotolerans (strain ATCC 27329 / DSM 1819 / JCM 2831 / NBRC 15690 / NCIMB 10815 / 0-1), this protein is Chaperonin GroEL.